The chain runs to 508 residues: Early growth response protein 1 (508 aa).

Disordered stretches follow at residues 18 to 78 (PQFL…ESFS) and 136 to 210 (MTNP…QYPP). Over residues 33–42 (NNSSSSSSSS) the composition is skewed to low complexity. A compositionally biased stretch (gly residues) spans 43–52 (SGGGGGGGSN). A compositionally biased stretch (low complexity) spans 139 to 164 (PPTSSSSAPSPAASSSSSASQSPPLS). Lys-278 participates in a covalent cross-link: Glycyl lysine isopeptide (Lys-Gly) (interchain with G-Cter in SUMO2). The disordered stretch occupies residues 292 to 311 (SRMRKYPNRPSKTPPHERPY). C2H2-type zinc fingers lie at residues 311–335 (YACP…IRIH), 341–363 (FQCR…IRTH), and 369–391 (FACD…TKIH). Residues 382–453 (DERKRHTKIH…SSTYPSPAHS (72 aa)) form a disordered region. Basic residues predominate over residues 386 to 396 (RHTKIHLRQKD). A compositionally biased stretch (low complexity) spans 402 to 450 (SVVASSAASSLSSYPSPVATSYPSPATTSFPSPVPTSYSSPGSSTYPSP). Repeat copies occupy residues 413 to 420 (SSYPSPVA), 421 to 428 (TSYPSPAT), 429 to 436 (TSFPSPVP), 437 to 444 (TSYSSPGS), 445 to 452 (STYPSPAH), 453 to 460 (SGFPSPSV), and 462 to 468 (TTYASVP). The segment at 413–468 (SSYPSPVATSYPSPATTSFPSPVPTSYSSPGSSTYPSPAHSGFPSPSVATTYASVP) is 7 X 8 AA tandem repeats of [TS](2)-[FY]-[PS]-S-P-[GSAV]-X.

This sequence belongs to the EGR C2H2-type zinc-finger protein family. As to quaternary structure, interacts with SNAI1 and SP1 upon 12-O-tetradecanoylphorbol-13-acetate (TPA) induction. In terms of tissue distribution, detected in kidney thick ascending limbs and collecting ducts (at protein level).

Its subcellular location is the nucleus. It is found in the cytoplasm. Functionally, transcriptional regulator. Recognizes and binds to the DNA sequence 5'-GCG(T/G)GGGCG-3'(EGR-site) in the promoter region of target genes. Binds double-stranded target DNA, irrespective of the cytosine methylation status. Regulates the transcription of numerous target genes, and thereby plays an important role in regulating the response to growth factors, DNA damage, and ischemia. Plays a role in the regulation of cell survival, proliferation and cell death. Activates expression of p53/TP53 and TGFB1, and thereby helps prevent tumor formation. Required for normal progress through mitosis and normal proliferation of hepatocytes after partial hepatectomy. Mediates responses to ischemia and hypoxia; regulates the expression of proteins such as IL1B and CXCL2 that are involved in inflammatory processes and development of tissue damage after ischemia. Regulates biosynthesis of luteinizing hormone (LHB) in the pituitary. Regulates the amplitude of the expression rhythms of clock genes: BMAL1, PER2 and NR1D1 in the liver via the activation of PER1 (clock repressor) transcription. Regulates the rhythmic expression of core-clock gene BMAL1 in the suprachiasmatic nucleus (SCN). Regulates biosynthesis of glucocorticoid receptor GR/NR3C1 in the hippocampus and thereby may play a role in the behavioral and hypothalamic-pituitary-adrenal responses to stress in offspring. This chain is Early growth response protein 1 (Egr1), found in Rattus norvegicus (Rat).